We begin with the raw amino-acid sequence, 82 residues long: QKPGEAVILEQSIDNDGLGQYTFGFKTSDGLIRQEQGVVKNQGTENEALEVRGTITWLGADGKDYSINFVADENGFQPQYTQ.

Residue Gln-1 is modified to Pyrrolidone carboxylic acid. The Chitin-binding type R&amp;R domain occupies Leu-18–Gln-82.

Functionally, component of the abdominal endocuticle. This Schistocerca gregaria (Desert locust) protein is Endocuticle structural protein SgAbd-6.